A 216-amino-acid chain; its full sequence is uncharacterized protein (216 aa).

The interval 55 to 216 (NEDKAEAMSN…NEKEKDVNPK (162 aa)) is disordered. 3 stretches are compositionally biased toward basic and acidic residues: residues 134 to 152 (LTEKPLTDTEPELHPDNHV), 177 to 187 (KINDKSDDTLH), and 207 to 216 (NEKEKDVNPK).

This is an uncharacterized protein from Caenorhabditis elegans.